Consider the following 481-residue polypeptide: tRNA-2-methylthio-N(6)-dimethylallyladenosine synthase (481 aa).

The 117-residue stretch at 24 to 140 (KKLFIESYGC…LPNLLNEVEE (117 aa)) folds into the MTTase N-terminal domain. Residues cysteine 33, cysteine 69, cysteine 103, cysteine 178, cysteine 182, and cysteine 185 each coordinate [4Fe-4S] cluster. One can recognise a Radical SAM core domain in the interval 164–411 (MSNGITALVA…DLQQKHAWWR (248 aa)). Residues 413–476 (EDFIGQTVEV…SGTLKGEAVG (64 aa)) form the TRAM domain.

Belongs to the methylthiotransferase family. MiaB subfamily. As to quaternary structure, monomer. Requires [4Fe-4S] cluster as cofactor.

Its subcellular location is the cytoplasm. The enzyme catalyses N(6)-dimethylallyladenosine(37) in tRNA + (sulfur carrier)-SH + AH2 + 2 S-adenosyl-L-methionine = 2-methylsulfanyl-N(6)-dimethylallyladenosine(37) in tRNA + (sulfur carrier)-H + 5'-deoxyadenosine + L-methionine + A + S-adenosyl-L-homocysteine + 2 H(+). Catalyzes the methylthiolation of N6-(dimethylallyl)adenosine (i(6)A), leading to the formation of 2-methylthio-N6-(dimethylallyl)adenosine (ms(2)i(6)A) at position 37 in tRNAs that read codons beginning with uridine. The sequence is that of tRNA-2-methylthio-N(6)-dimethylallyladenosine synthase from Flavobacterium psychrophilum (strain ATCC 49511 / DSM 21280 / CIP 103535 / JIP02/86).